The following is a 397-amino-acid chain: 8-amino-7-oxononanoate synthase (397 aa).

Arg24 serves as a coordination point for substrate. 110–111 (GY) contacts pyridoxal 5'-phosphate. A substrate-binding site is contributed by His135. Ser183, His211, and Thr240 together coordinate pyridoxal 5'-phosphate. At Lys243 the chain carries N6-(pyridoxal phosphate)lysine. A substrate-binding site is contributed by Thr357.

Belongs to the class-II pyridoxal-phosphate-dependent aminotransferase family. BioF subfamily. In terms of assembly, homodimer. Pyridoxal 5'-phosphate serves as cofactor.

The catalysed reaction is 6-carboxyhexanoyl-[ACP] + L-alanine + H(+) = (8S)-8-amino-7-oxononanoate + holo-[ACP] + CO2. It functions in the pathway cofactor biosynthesis; biotin biosynthesis. In terms of biological role, catalyzes the decarboxylative condensation of pimeloyl-[acyl-carrier protein] and L-alanine to produce 8-amino-7-oxononanoate (AON), [acyl-carrier protein], and carbon dioxide. This chain is 8-amino-7-oxononanoate synthase, found in Hydrogenovibrio crunogenus (strain DSM 25203 / XCL-2) (Thiomicrospira crunogena).